Consider the following 330-residue polypeptide: Type I restriction enzyme MpnII specificity subunit (330 aa).

It belongs to the type-I restriction system S methylase family. The methyltransferase is composed of M and S polypeptides.

The specificity (S) subunit of a type I restriction enzyme; this subunit dictates DNA sequence specificity. The M and S subunits together form a methyltransferase (MTase) that probably methylates A-2 on the top strand and A-3 on the bottom strand of the sequence 5'-GAN(7)TAY-3'. As the bacterial DNA is methylated on this sequence and this is the only type I methylase in the genome, it is probably responsible for all of the methylation on this site in the genome. The R subunit has multiple frameshifts and is probably not expressed in this bacteria. This is Type I restriction enzyme MpnII specificity subunit from Mycoplasma pneumoniae (strain ATCC 29342 / M129 / Subtype 1) (Mycoplasmoides pneumoniae).